The following is a 452-amino-acid chain: Biotin carboxylase (452 aa).

The Biotin carboxylation domain maps to 1–445 (MFKKVLIANR…TTAFVTNHLK (445 aa)). ATP-binding positions include K116, K158, 164-165 (GG), 200-203 (EKAV), H208, and H235. One can recognise an ATP-grasp domain in the interval 120 to 317 (RTAMQTAGVP…LVEWQLLIAA (198 aa)). K237 lines the hydrogencarbonate pocket. ATP-binding residues include E275 and E288. Residues E275, E288, and N290 each coordinate Mg(2+). Mn(2+) contacts are provided by E275, E288, and N290. R292, V295, and R338 together coordinate hydrogencarbonate. Residue R292 is part of the active site. R338 is a binding site for biotin.

As to quaternary structure, acetyl-CoA carboxylase is a heterohexamer of biotin carboxyl carrier protein, biotin carboxylase and the two subunits of carboxyl transferase in a 2:2 complex. Requires Mg(2+) as cofactor. Mn(2+) serves as cofactor.

It catalyses the reaction N(6)-biotinyl-L-lysyl-[protein] + hydrogencarbonate + ATP = N(6)-carboxybiotinyl-L-lysyl-[protein] + ADP + phosphate + H(+). It functions in the pathway lipid metabolism; malonyl-CoA biosynthesis; malonyl-CoA from acetyl-CoA: step 1/1. Functionally, this protein is a component of the acetyl coenzyme A carboxylase complex; first, biotin carboxylase catalyzes the carboxylation of the carrier protein and then the transcarboxylase transfers the carboxyl group to form malonyl-CoA. The chain is Biotin carboxylase (accC) from Halalkalibacterium halodurans (strain ATCC BAA-125 / DSM 18197 / FERM 7344 / JCM 9153 / C-125) (Bacillus halodurans).